The chain runs to 313 residues: Ribose-phosphate pyrophosphokinase (313 aa).

ATP contacts are provided by residues 40 to 42 (DGE) and 98 to 99 (RQ). Mg(2+) contacts are provided by His132 and Asp172. Residue Lys195 is part of the active site. Residues Arg197, Asp221, and 225-229 (DTAGT) each bind D-ribose 5-phosphate.

The protein belongs to the ribose-phosphate pyrophosphokinase family. Class I subfamily. As to quaternary structure, homohexamer. Mg(2+) serves as cofactor.

The protein resides in the cytoplasm. The enzyme catalyses D-ribose 5-phosphate + ATP = 5-phospho-alpha-D-ribose 1-diphosphate + AMP + H(+). It participates in metabolic intermediate biosynthesis; 5-phospho-alpha-D-ribose 1-diphosphate biosynthesis; 5-phospho-alpha-D-ribose 1-diphosphate from D-ribose 5-phosphate (route I): step 1/1. Involved in the biosynthesis of the central metabolite phospho-alpha-D-ribosyl-1-pyrophosphate (PRPP) via the transfer of pyrophosphoryl group from ATP to 1-hydroxyl of ribose-5-phosphate (Rib-5-P). The sequence is that of Ribose-phosphate pyrophosphokinase from Porphyromonas gingivalis (strain ATCC BAA-308 / W83).